Consider the following 145-residue polypeptide: NADH-quinone oxidoreductase subunit A (145 aa).

3 consecutive transmembrane segments (helical) span residues 14 to 34 (FAVF…GGFL), 66 to 86 (FYLV…LYAW), and 96 to 116 (VGFI…VYLV).

It belongs to the complex I subunit 3 family. In terms of assembly, NDH-1 is composed of 13 different subunits. Subunits NuoA, H, J, K, L, M, N constitute the membrane sector of the complex.

It localises to the cell inner membrane. The catalysed reaction is a quinone + NADH + 5 H(+)(in) = a quinol + NAD(+) + 4 H(+)(out). In terms of biological role, NDH-1 shuttles electrons from NADH, via FMN and iron-sulfur (Fe-S) centers, to quinones in the respiratory chain. The immediate electron acceptor for the enzyme in this species is believed to be ubiquinone. Couples the redox reaction to proton translocation (for every two electrons transferred, four hydrogen ions are translocated across the cytoplasmic membrane), and thus conserves the redox energy in a proton gradient. The polypeptide is NADH-quinone oxidoreductase subunit A (Sodalis glossinidius (strain morsitans)).